Here is a 328-residue protein sequence, read N- to C-terminus: Glycerol-3-phosphate dehydrogenase [NAD(P)+] (328 aa).

Tryptophan 15, histidine 35, tyrosine 51, and lysine 107 together coordinate NADPH. 3 residues coordinate sn-glycerol 3-phosphate: lysine 107, glycine 135, and serine 137. Alanine 139 is an NADPH binding site. Residues lysine 190, aspartate 243, serine 253, arginine 254, and asparagine 255 each coordinate sn-glycerol 3-phosphate. Lysine 190 (proton acceptor) is an active-site residue. Arginine 254 contributes to the NADPH binding site. Leucine 276 and glutamate 278 together coordinate NADPH.

The protein belongs to the NAD-dependent glycerol-3-phosphate dehydrogenase family.

The protein localises to the cytoplasm. The enzyme catalyses sn-glycerol 3-phosphate + NAD(+) = dihydroxyacetone phosphate + NADH + H(+). It catalyses the reaction sn-glycerol 3-phosphate + NADP(+) = dihydroxyacetone phosphate + NADPH + H(+). It participates in membrane lipid metabolism; glycerophospholipid metabolism. Its function is as follows. Catalyzes the reduction of the glycolytic intermediate dihydroxyacetone phosphate (DHAP) to sn-glycerol 3-phosphate (G3P), the key precursor for phospholipid synthesis. The polypeptide is Glycerol-3-phosphate dehydrogenase [NAD(P)+] (Rhodopseudomonas palustris (strain BisA53)).